Reading from the N-terminus, the 312-residue chain is Homoserine O-succinyltransferase (312 aa).

C142 acts as the Acyl-thioester intermediate in catalysis. Substrate is bound by residues K163 and S192. Catalysis depends on H235, which acts as the Proton acceptor. E237 is a catalytic residue. R249 contacts substrate.

The protein belongs to the MetA family.

The protein resides in the cytoplasm. It catalyses the reaction L-homoserine + succinyl-CoA = O-succinyl-L-homoserine + CoA. The protein operates within amino-acid biosynthesis; L-methionine biosynthesis via de novo pathway; O-succinyl-L-homoserine from L-homoserine: step 1/1. Transfers a succinyl group from succinyl-CoA to L-homoserine, forming succinyl-L-homoserine. The polypeptide is Homoserine O-succinyltransferase (Shewanella halifaxensis (strain HAW-EB4)).